Reading from the N-terminus, the 605-residue chain is Golgi-associated RAB2 interactor protein 3 (605 aa).

2 disordered regions span residues Gly-234–Thr-265 and Tyr-407–Lys-529. The span at His-239–Thr-265 shows a compositional bias: low complexity. Residues Lys-434–Ala-457 are compositionally biased toward basic residues. The Bipartite nuclear localization signal signature appears at Arg-441 to Gly-458. A compositionally biased stretch (polar residues) spans Lys-463 to His-473. The segment covering Asn-475–Gly-484 has biased composition (basic and acidic residues). Over residues Arg-489–Ser-500 the composition is skewed to basic residues. The span at Gln-513–Ala-526 shows a compositional bias: polar residues. At Ser-592 the chain carries Phosphoserine.

This sequence belongs to the GARIN family. Interacts (via N-terminus) with RAB2B (in GTP-bound form). Interacts with FRG1. In terms of tissue distribution, expressed in adult spermatocytes and spermatids (at protein level).

Its subcellular location is the golgi apparatus. The protein resides in the nucleus. It localises to the cajal body. Its function is as follows. May be involved in RNA biogenesis. This Homo sapiens (Human) protein is Golgi-associated RAB2 interactor protein 3.